We begin with the raw amino-acid sequence, 20 residues long: Insulin-like growth factor-binding protein 2 (20 aa).

The 19-residue stretch at 2–20 folds into the IGFBP N-terminal domain; the sequence is LVFYCPKCTAERQTACPKL.

Binds IGF2 more than IGF1. Post-translationally, N-glycosylated.

It localises to the secreted. In terms of biological role, inhibits IGF-mediated growth and developmental rates. IGF-binding proteins prolong the half-life of the IGFs and have been shown to either inhibit or stimulate the growth promoting effects of the IGFs on cell culture. They alter the interaction of IGFs with their cell surface receptors. The sequence is that of Insulin-like growth factor-binding protein 2 (igfbp2) from Oncorhynchus tshawytscha (Chinook salmon).